A 260-amino-acid chain; its full sequence is Methyl-coenzyme M reductase I subunit gamma (260 aa).

Arg-123 lines the coenzyme M pocket.

The protein belongs to the methyl-coenzyme M reductase gamma subunit family. As to quaternary structure, MCR is a hexamer of two alpha, two beta, and two gamma chains, forming a dimer of heterotrimers. Coenzyme F430 serves as cofactor.

The protein localises to the cytoplasm. The catalysed reaction is coenzyme B + methyl-coenzyme M = methane + coenzyme M-coenzyme B heterodisulfide. Its pathway is one-carbon metabolism; methyl-coenzyme M reduction; methane from methyl-coenzyme M: step 1/1. Its function is as follows. Component of the methyl-coenzyme M reductase (MCR) I that catalyzes the reductive cleavage of methyl-coenzyme M (CoM-S-CH3 or 2-(methylthio)ethanesulfonate) using coenzyme B (CoB or 7-mercaptoheptanoylthreonine phosphate) as reductant which results in the production of methane and the mixed heterodisulfide of CoB and CoM (CoM-S-S-CoB). This is the final step in methanogenesis. This chain is Methyl-coenzyme M reductase I subunit gamma (mcrG), found in Methanocaldococcus jannaschii (strain ATCC 43067 / DSM 2661 / JAL-1 / JCM 10045 / NBRC 100440) (Methanococcus jannaschii).